A 264-amino-acid polypeptide reads, in one-letter code: MEYIIQEINSSYLIVGYIDDNDPKENFVEQFIDEFIDKHNKNIIADIICLRIVRNPNEIDLYVLCRSNINLKILDSRFKNINDAILHICSDNLFLPFEQVDDYGIISLLNNRTNIETGTITMLGKKLNYSLIKTESVDKTWLEGSYLELIKRKFIESPFITFETISDAIEYDDKKEDIITLKQYIMIYNDKTITNPENRLQYAVFSDSKGFLIFDDNREFNQIFNNHINYIVHSESSDEEDNDDDIINNDTNNDINNDDIEIKT.

A disordered region spans residues 235 to 264 (ESSDEEDNDDDIINNDTNNDINNDDIEIKT). The segment covering 237–247 (SDEEDNDDDII) has biased composition (acidic residues).

This is an uncharacterized protein from Acanthamoeba polyphaga mimivirus (APMV).